Here is a 487-residue protein sequence, read N- to C-terminus: Aspyridones efflux protein apdF (487 aa).

Residues 1 to 21 (MSSVRESSKDESIVHPPKAPE) show a composition bias toward basic and acidic residues. Positions 1-25 (MSSVRESSKDESIVHPPKAPESEPF) are disordered. Residues 35 to 55 (VALGAGGVLFCTFGYVNAFGV) form a helical membrane-spanning segment. N67 carries N-linked (GlcNAc...) asparagine glycosylation. 8 helical membrane passes run 75-95 (WIGS…GPLF), 99-119 (GAKV…MTSL), 126-146 (FFLA…APAL), 159-179 (AAMG…PIAL), 191-211 (WAVR…VLGI), 234-254 (VATL…FFYL), 262-282 (GMST…SFFG), and 293-313 (IGPY…TFCW). An N-linked (GlcNAc...) asparagine glycan is attached at N319. 3 helical membrane passes run 322–342 (IIVF…ITPA), 354–374 (IGTY…IGPP), and 385–405 (GFLQ…VLAF).

The protein belongs to the major facilitator superfamily. Monocarboxylate porter (TC 2.A.1.13) family.

The protein localises to the cell membrane. In terms of biological role, efflux pump that may be involved in the secretion of aspyridones. The sequence is that of Aspyridones efflux protein apdF from Emericella nidulans (strain FGSC A4 / ATCC 38163 / CBS 112.46 / NRRL 194 / M139) (Aspergillus nidulans).